The sequence spans 324 residues: Ribosomal RNA small subunit methyltransferase H (324 aa).

Residues G47–H49, D67, L96, D115, and Q122 each bind S-adenosyl-L-methionine.

The protein belongs to the methyltransferase superfamily. RsmH family.

It is found in the cytoplasm. It catalyses the reaction cytidine(1402) in 16S rRNA + S-adenosyl-L-methionine = N(4)-methylcytidine(1402) in 16S rRNA + S-adenosyl-L-homocysteine + H(+). Its function is as follows. Specifically methylates the N4 position of cytidine in position 1402 (C1402) of 16S rRNA. The sequence is that of Ribosomal RNA small subunit methyltransferase H from Halorhodospira halophila (strain DSM 244 / SL1) (Ectothiorhodospira halophila (strain DSM 244 / SL1)).